Reading from the N-terminus, the 193-residue chain is Dihydrofolate reductase (193 aa).

Residues methionine 1–lysine 193 enclose the DHFR domain. Residues arginine 7, phenylalanine 22–glycine 27, glycine 52–threonine 55, and aspartate 73–aspartate 77 each bind NADP(+).

Belongs to the dihydrofolate reductase family.

It catalyses the reaction (6S)-5,6,7,8-tetrahydrofolate + NADP(+) = 7,8-dihydrofolate + NADPH + H(+). It participates in cofactor biosynthesis; tetrahydrofolate biosynthesis; 5,6,7,8-tetrahydrofolate from 7,8-dihydrofolate: step 1/1. Its function is as follows. Key enzyme in folate metabolism. Catalyzes an essential reaction for de novo glycine and purine synthesis, and for DNA precursor synthesis. The protein is Dihydrofolate reductase (frd) of Escherichia coli (Bacteriophage T4).